Consider the following 460-residue polypeptide: tRNA-2-methylthio-N(6)-dimethylallyladenosine synthase (460 aa).

The MTTase N-terminal domain maps to 23-138; that stretch reads RKVYVHTFGC…LPEMVARAER (116 aa). Positions 32, 68, 101, 176, 180, and 183 each coordinate [4Fe-4S] cluster. A Radical SAM core domain is found at 162–394; sequence ARGRPTAFVT…QAAQRRIAAA (233 aa). The region spanning 397–460 is the TRAM domain; the sequence is AAELGKVVEV…GGSSLSGTPA (64 aa).

It belongs to the methylthiotransferase family. MiaB subfamily. Monomer. [4Fe-4S] cluster serves as cofactor.

Its subcellular location is the cytoplasm. The catalysed reaction is N(6)-dimethylallyladenosine(37) in tRNA + (sulfur carrier)-SH + AH2 + 2 S-adenosyl-L-methionine = 2-methylsulfanyl-N(6)-dimethylallyladenosine(37) in tRNA + (sulfur carrier)-H + 5'-deoxyadenosine + L-methionine + A + S-adenosyl-L-homocysteine + 2 H(+). In terms of biological role, catalyzes the methylthiolation of N6-(dimethylallyl)adenosine (i(6)A), leading to the formation of 2-methylthio-N6-(dimethylallyl)adenosine (ms(2)i(6)A) at position 37 in tRNAs that read codons beginning with uridine. This is tRNA-2-methylthio-N(6)-dimethylallyladenosine synthase from Anaeromyxobacter sp. (strain Fw109-5).